The following is a 457-amino-acid chain: Flavin-containing monooxygenase FMO GS-OX2 (457 aa).

17 to 22 (GAGAAG) provides a ligand contact to FAD. Residue 211 to 216 (GNFASG) coordinates NADP(+).

Belongs to the FMO family.

The enzyme catalyses a (Z)-omega-(methylsulfanyl)-N-sulfo-alkylhydroximate S-glucoside + NADPH + O2 + H(+) = a (Z)-omega-(methylsulfinyl)-alkyl-glucosinolate + NADP(+) + H2O. In terms of biological role, catalyzes the conversion of methylthioalkyl glucosinolates of any chain length into methylsulfinylalkyl glucosinolates. This Arabidopsis thaliana (Mouse-ear cress) protein is Flavin-containing monooxygenase FMO GS-OX2 (FMOGS-OX2).